The following is a 187-amino-acid chain: Adenine phosphoribosyltransferase (187 aa).

This sequence belongs to the purine/pyrimidine phosphoribosyltransferase family. Homodimer.

The protein resides in the cytoplasm. It carries out the reaction AMP + diphosphate = 5-phospho-alpha-D-ribose 1-diphosphate + adenine. The protein operates within purine metabolism; AMP biosynthesis via salvage pathway; AMP from adenine: step 1/1. In terms of biological role, catalyzes a salvage reaction resulting in the formation of AMP, that is energically less costly than de novo synthesis. This chain is Adenine phosphoribosyltransferase, found in Yersinia pseudotuberculosis serotype I (strain IP32953).